The following is a 282-amino-acid chain: Phosphatidylglycerol--prolipoprotein diacylglyceryl transferase (282 aa).

A run of 4 helical transmembrane segments spans residues I23–W43, F71–Y91, I106–I126, and G132–F152. R154 is an a 1,2-diacyl-sn-glycero-3-phospho-(1'-sn-glycerol) binding site. Helical transmembrane passes span L189–G209, G217–F237, and W252–L272.

The protein belongs to the Lgt family.

It localises to the cell inner membrane. It catalyses the reaction L-cysteinyl-[prolipoprotein] + a 1,2-diacyl-sn-glycero-3-phospho-(1'-sn-glycerol) = an S-1,2-diacyl-sn-glyceryl-L-cysteinyl-[prolipoprotein] + sn-glycerol 1-phosphate + H(+). Its pathway is protein modification; lipoprotein biosynthesis (diacylglyceryl transfer). Functionally, catalyzes the transfer of the diacylglyceryl group from phosphatidylglycerol to the sulfhydryl group of the N-terminal cysteine of a prolipoprotein, the first step in the formation of mature lipoproteins. This chain is Phosphatidylglycerol--prolipoprotein diacylglyceryl transferase, found in Rhizobium leguminosarum bv. trifolii (strain WSM2304).